The sequence spans 104 residues: MIPGELFIQDGEIELNAERETATLSVANAGDRPIQVGSHYHFFETNPALQFDRAKARGMRLDIAAGTAVRFEPGQSREVQLVALAGKREVYGFRGEVMGKLDKA.

It belongs to the urease beta subunit family. As to quaternary structure, heterotrimer of UreA (gamma), UreB (beta) and UreC (alpha) subunits. Three heterotrimers associate to form the active enzyme.

The protein resides in the cytoplasm. The enzyme catalyses urea + 2 H2O + H(+) = hydrogencarbonate + 2 NH4(+). The protein operates within nitrogen metabolism; urea degradation; CO(2) and NH(3) from urea (urease route): step 1/1. The polypeptide is Urease subunit beta (Rhodopseudomonas palustris (strain BisB18)).